The sequence spans 311 residues: tRNA-cytidine(32) 2-sulfurtransferase (311 aa).

Residues 47 to 52 carry the PP-loop motif motif; the sequence is SGGKDS. C122, C125, and C213 together coordinate [4Fe-4S] cluster.

This sequence belongs to the TtcA family. Homodimer. The cofactor is Mg(2+). [4Fe-4S] cluster is required as a cofactor.

The protein localises to the cytoplasm. It catalyses the reaction cytidine(32) in tRNA + S-sulfanyl-L-cysteinyl-[cysteine desulfurase] + AH2 + ATP = 2-thiocytidine(32) in tRNA + L-cysteinyl-[cysteine desulfurase] + A + AMP + diphosphate + H(+). The protein operates within tRNA modification. Catalyzes the ATP-dependent 2-thiolation of cytidine in position 32 of tRNA, to form 2-thiocytidine (s(2)C32). The sulfur atoms are provided by the cysteine/cysteine desulfurase (IscS) system. The chain is tRNA-cytidine(32) 2-sulfurtransferase from Klebsiella pneumoniae subsp. pneumoniae (strain ATCC 700721 / MGH 78578).